A 426-amino-acid polypeptide reads, in one-letter code: Serine--tRNA ligase (426 aa).

An L-serine-binding site is contributed by 233 to 235 (TSE). ATP is bound at residue 264-266 (RAE). Residue E287 participates in L-serine binding. Residue 351-354 (EISS) participates in ATP binding. S387 lines the L-serine pocket.

The protein belongs to the class-II aminoacyl-tRNA synthetase family. Type-1 seryl-tRNA synthetase subfamily. In terms of assembly, homodimer. The tRNA molecule binds across the dimer.

It localises to the cytoplasm. The enzyme catalyses tRNA(Ser) + L-serine + ATP = L-seryl-tRNA(Ser) + AMP + diphosphate + H(+). It carries out the reaction tRNA(Sec) + L-serine + ATP = L-seryl-tRNA(Sec) + AMP + diphosphate + H(+). The protein operates within aminoacyl-tRNA biosynthesis; selenocysteinyl-tRNA(Sec) biosynthesis; L-seryl-tRNA(Sec) from L-serine and tRNA(Sec): step 1/1. Its function is as follows. Catalyzes the attachment of serine to tRNA(Ser). Is also able to aminoacylate tRNA(Sec) with serine, to form the misacylated tRNA L-seryl-tRNA(Sec), which will be further converted into selenocysteinyl-tRNA(Sec). The sequence is that of Serine--tRNA ligase from Xanthomonas campestris pv. campestris (strain 8004).